The chain runs to 165 residues: Phosphopantetheine adenylyltransferase (165 aa).

Residue Ser-10 coordinates substrate. ATP is bound by residues 10-11 (SF) and His-18. Lys-42, Leu-74, and Arg-88 together coordinate substrate. Residues 89 to 91 (GLR), Glu-99, and 124 to 130 (WFYTSST) contribute to the ATP site.

It belongs to the bacterial CoaD family. Homohexamer. It depends on Mg(2+) as a cofactor.

The protein resides in the cytoplasm. It catalyses the reaction (R)-4'-phosphopantetheine + ATP + H(+) = 3'-dephospho-CoA + diphosphate. It functions in the pathway cofactor biosynthesis; coenzyme A biosynthesis; CoA from (R)-pantothenate: step 4/5. Functionally, reversibly transfers an adenylyl group from ATP to 4'-phosphopantetheine, yielding dephospho-CoA (dPCoA) and pyrophosphate. The protein is Phosphopantetheine adenylyltransferase of Syntrophus aciditrophicus (strain SB).